We begin with the raw amino-acid sequence, 694 residues long: Zinc finger BED domain-containing protein 5 (694 aa).

The segment at 109 to 165 adopts a BED-type zinc-finger fold; it reads RKYDESYLSFGFTYFGNRDAPHAQCVLCKKILSNSSLAPSKLRRHLETKHAAYKDKD. Zn(2+)-binding residues include Cys133, Cys136, His153, and His158.

The polypeptide is Zinc finger BED domain-containing protein 5 (ZBED5) (Bos taurus (Bovine)).